We begin with the raw amino-acid sequence, 302 residues long: tRNA pseudouridine synthase B (302 aa).

Histidine 40 contacts substrate. Aspartate 45 (nucleophile) is an active-site residue. 3 residues coordinate substrate: tyrosine 73, tyrosine 178, and leucine 199.

The protein belongs to the pseudouridine synthase TruB family. Type 1 subfamily.

The catalysed reaction is uridine(55) in tRNA = pseudouridine(55) in tRNA. In terms of biological role, responsible for synthesis of pseudouridine from uracil-55 in the psi GC loop of transfer RNAs. The polypeptide is tRNA pseudouridine synthase B (Buchnera aphidicola subsp. Baizongia pistaciae (strain Bp)).